Consider the following 387-residue polypeptide: Patatin group D-2 (387 aa).

The signal sequence occupies residues 1–23; that stretch reads MATTKSFLILIVMILATTSSTFA. The PNPLA domain occupies 32–230; it reads LSIDGGGIKG…TVADPALLSI (199 aa). A GXGXXG motif is present at residues 36-41; it reads GGGIKG. Positions 75-79 match the GXSXG motif; it reads GTSTG. The active-site Nucleophile is serine 77. Asparagine 115 carries N-linked (GlcNAc...) asparagine glycosylation. Aspartate 216 acts as the Proton acceptor in catalysis. Positions 216-218 match the DGA/G motif; the sequence is DGA. Residues 361-385 adopt a coiled-coil conformation; the sequence is ETYEEALKRFAKLLSDRKKLRANKA.

This sequence belongs to the patatin family. In terms of tissue distribution, tuber.

It is found in the vacuole. Its function is as follows. Probable lipolytic acyl hydrolase (LAH), an activity which is thought to be involved in the response of tubers to pathogens. This is Patatin group D-2 from Solanum tuberosum (Potato).